The chain runs to 454 residues: tRNA modification GTPase MnmE (454 aa).

(6S)-5-formyl-5,6,7,8-tetrahydrofolate contacts are provided by R23, E80, and K120. The TrmE-type G domain occupies 216-377 (GMKVVIAGRP…LRNHLKQSMG (162 aa)). N226 contributes to the K(+) binding site. Residues 226 to 231 (NAGKSS), 245 to 251 (TDIAGTT), 270 to 273 (DTAG), 335 to 338 (NKAD), and 358 to 360 (SAR) each bind GTP. Mg(2+) is bound at residue S230. Positions 245, 247, and 250 each coordinate K(+). T251 serves as a coordination point for Mg(2+). K454 is a (6S)-5-formyl-5,6,7,8-tetrahydrofolate binding site.

This sequence belongs to the TRAFAC class TrmE-Era-EngA-EngB-Septin-like GTPase superfamily. TrmE GTPase family. In terms of assembly, homodimer. Heterotetramer of two MnmE and two MnmG subunits. The cofactor is K(+).

The protein localises to the cytoplasm. Functionally, exhibits a very high intrinsic GTPase hydrolysis rate. Involved in the addition of a carboxymethylaminomethyl (cmnm) group at the wobble position (U34) of certain tRNAs, forming tRNA-cmnm(5)s(2)U34. This chain is tRNA modification GTPase MnmE, found in Escherichia coli O139:H28 (strain E24377A / ETEC).